The primary structure comprises 1422 residues: YEATS domain-containing protein 2 (1422 aa).

Residue Lys-9 forms a Glycyl lysine isopeptide (Lys-Gly) (interchain with G-Cter in SUMO2) linkage. Positions 47–80 (KEQFALEMKNKEHEIEVIDQRLIEARRMMDKLRA) form a coiled coil. Lys-113 participates in a covalent cross-link: Glycyl lysine isopeptide (Lys-Gly) (interchain with G-Cter in SUMO2). The segment at 117 to 198 (ESPSRSSSPA…KTEQRNADLT (82 aa)) is disordered. Phosphoserine is present on residues Ser-118, Ser-120, and Ser-157. Polar residues predominate over residues 119–148 (PSRSSSPANQRAETPSANHSESDSLSQHND). Residues 149-165 (FLSDKDNNSNMDIEERL) are compositionally biased toward basic and acidic residues. A compositionally biased stretch (polar residues) spans 166–176 (SNNMEQRPSRN). A compositionally biased stretch (basic and acidic residues) spans 177–198 (TGRDTSRITGSHKTEQRNADLT). A Glycyl lysine isopeptide (Lys-Gly) (interchain with G-Cter in SUMO2) cross-link involves residue Lys-189. A YEATS domain is found at 200–345 (ETSRLFVKKT…EDCIYPQSSE (146 aa)). Histone H3K27cr binding stretches follow at residues 259–261 (HPS) and 282–284 (WGE). Lys-370 participates in a covalent cross-link: Glycyl lysine isopeptide (Lys-Gly) (interchain with G-Cter in SUMO2). The residue at position 407 (Thr-407) is a Phosphothreonine. Phosphoserine occurs at positions 447, 463, 465, 471, and 473. Residues 465 to 486 (SPISTPSPSPLPRTPTSTPVHV) form a disordered region. Residue Thr-478 is modified to Phosphothreonine. Residue Lys-487 forms a Glycyl lysine isopeptide (Lys-Gly) (interchain with G-Cter in SUMO2) linkage. The span at 513 to 535 (TTPSTGSPTNKISTASQVSQGTG) shows a compositional bias: polar residues. Positions 513–540 (TTPSTGSPTNKISTASQVSQGTGSPVPK) are disordered. Position 536 is a phosphoserine (Ser-536). Lys-552 participates in a covalent cross-link: Glycyl lysine isopeptide (Lys-Gly) (interchain with G-Cter in SUMO2). Ser-575 carries the post-translational modification Phosphoserine. Residue Lys-592 forms a Glycyl lysine isopeptide (Lys-Gly) (interchain with G-Cter in SUMO2) linkage. Position 627 is a phosphoserine (Ser-627). Residues Lys-649 and Lys-773 each participate in a glycyl lysine isopeptide (Lys-Gly) (interchain with G-Cter in SUMO2) cross-link. The disordered stretch occupies residues 794–842 (GSAASGGSGAGGGGGGGGGGGSGSGGGGSTGGGGGTAGGGTQSTAGPGG). Residues 797-842 (ASGGSGAGGGGGGGGGGGSGSGGGGSTGGGGGTAGGGTQSTAGPGG) show a composition bias toward gly residues. Residue Lys-923 forms a Glycyl lysine isopeptide (Lys-Gly) (interchain with G-Cter in SUMO2) linkage. Lys-1110 is covalently cross-linked (Glycyl lysine isopeptide (Lys-Gly) (interchain with G-Cter in SUMO1); alternate). Lys-1110 participates in a covalent cross-link: Glycyl lysine isopeptide (Lys-Gly) (interchain with G-Cter in SUMO2); alternate. Lys-1130 is covalently cross-linked (Glycyl lysine isopeptide (Lys-Gly) (interchain with G-Cter in SUMO2)). Thr-1219 is subject to Phosphothreonine. Residues Lys-1222 and Lys-1285 each participate in a glycyl lysine isopeptide (Lys-Gly) (interchain with G-Cter in SUMO2) cross-link.

In terms of assembly, component of the ADA2A-containing complex (ATAC), composed of KAT14, KAT2A, TADA2L, TADA3L, ZZ3, MBIP, WDR5, YEATS2, SGF29 and DR1.

It is found in the nucleus. Its function is as follows. Chromatin reader component of the ATAC complex, a complex with histone acetyltransferase activity on histones H3 and H4. YEATS2 specifically recognizes and binds histone H3 crotonylated at 'Lys-27' (H3K27cr). Crotonylation marks active promoters and enhancers and confers resistance to transcriptional repressors. The sequence is that of YEATS domain-containing protein 2 from Homo sapiens (Human).